We begin with the raw amino-acid sequence, 93 residues long: Large ribosomal subunit protein uL23 (93 aa).

It belongs to the universal ribosomal protein uL23 family. Part of the 50S ribosomal subunit. Contacts protein L29, and trigger factor when it is bound to the ribosome.

Its function is as follows. One of the early assembly proteins it binds 23S rRNA. One of the proteins that surrounds the polypeptide exit tunnel on the outside of the ribosome. Forms the main docking site for trigger factor binding to the ribosome. The protein is Large ribosomal subunit protein uL23 of Campylobacter curvus (strain 525.92).